The following is a 43-amino-acid chain: Defensin-B (43 aa).

Intrachain disulfides connect cysteine 3–cysteine 34, cysteine 20–cysteine 39, and cysteine 24–cysteine 41.

The protein resides in the secreted. Antibacterial protein. Strong activity against the Gram-positive bacteria M.luteus, B.megaterium and S.aureus. Reduced activity against Gram-positive bacterium B.subtilis and weak activity against Gram-negative bacterium X.japonicus. No detectable activity against the Gram-negative bacteria E.asbriae, E.coli, P.aeruginosa and S.marcescens. The sequence is that of Defensin-B from Anomala cuprea (Cupreous chafer beetle).